Reading from the N-terminus, the 91-residue chain is UPF0250 protein Pfl01_4965 (91 aa).

Belongs to the UPF0250 family.

This Pseudomonas fluorescens (strain Pf0-1) protein is UPF0250 protein Pfl01_4965.